A 1588-amino-acid polypeptide reads, in one-letter code: uncharacterized protein (1588 aa).

Residues 486-495 are compositionally biased toward basic and acidic residues; the sequence is RKRLTSKTED. Disordered regions lie at residues 486-515 and 1146-1176; these read RKRL…KRRP and GGQD…RELN. Residues 498–507 show a composition bias toward polar residues; sequence NQWTRDCQNS. The segment covering 1150–1169 has biased composition (low complexity); sequence NVSDQSENQSENQSLESETS.

Its subcellular location is the virion. This is an uncharacterized protein from Acanthamoeba polyphaga (Amoeba).